The following is a 43-amino-acid chain: Pre-protein VI (43 aa).

Residues 1 to 33 (MEGINFSALAPRYGSRPMLSSWSDIGTSSMNGG) constitute a propeptide that is removed on maturation.

It belongs to the adenoviridae protein VI family. In terms of assembly, interacts with hexon protein; this interaction allows nuclear import of hexon trimers and possibly pre-capsid assembly. Interacts (via C-terminal NLS) with importin alpha/beta. As to quaternary structure, interacts (via PPxY motif) with host NEDD4 ubiquitine ligase; this interaction might play a role in virus intracellular transport during entry. Part of a complex composed of the core-capsid bridging protein, the endosome lysis protein VI and the hexon-linking protein VIII; these interactions bridge the virus core to the capsid. Interacts with peripentonal hexons; this interaction stabilizes the capsid by gluing two peripentonal hexons together and joining them with an adjacent group-of-nine hexon. Protease cofactor: Heterodimer with the viral protease; disulfide-linked. Interacts with the viral protease. Post-translationally, ubiquitinated by Nedd4 following partial capsid disassembly; which might play a role in intracellular virus movement during entry. In terms of processing, protease cofactor: Contains the major nuclear import and export signals. Proteolytically removed during virion maturation. The processing of the C-terminus turns the precursor into a mature viral structural protein and abrogates its ability to promote hexon import and act as a potential chaperone protein.

The protein localises to the host nucleus. The protein resides in the host cytoplasm. Its subcellular location is the virion. In terms of biological role, during virus assembly, promotes hexon trimers nuclear import through nuclear pore complexes via an importin alpha/beta-dependent mechanism. By analogy to herpesviruses capsid assembly, might act as a chaperone to promote the formation of the icosahedral capsid. Functionally, structural component of the virion that provides increased stability to the particle shell through its interaction with the core-capsid bridging protein and the hexon-linking protein VIII. Fibers shedding during virus entry into host cell allows the endosome lysis protein to be exposed as a membrane-lytic peptide. Exhibits pH-independent membrane fragmentation activity and probably mediates viral rapid escape from host endosome via organellar membrane lysis. It is not clear if it then remains partially associated with the capsid and involved in the intracellular microtubule-dependent transport of capsid to the nucleus, or if it is lost during endosomal penetration. This Bovine adenovirus 2 (BAdV-2) protein is Pre-protein VI.